We begin with the raw amino-acid sequence, 734 residues long: ATP-dependent RNA helicase SUV3L, mitochondrial (734 aa).

Residues 1–60 (MAAAAAIAAALLRRSTSSQHHRRILLLPLLSHLQRAAPRSPSPWDPPPHHRFFFSSDVTA) constitute a mitochondrion transit peptide. The tract at residues 58–88 (VTAEGDSKPRPPLDGKQLWREVSTSEPATGA) is disordered. Residues 62–76 (GDSKPRPPLDGKQLW) are compositionally biased toward basic and acidic residues. Positions 198–356 (FARAMRRRVV…RFKPLVVEAK (159 aa)) constitute a Helicase ATP-binding domain. 211 to 218 (GPTNSGKT) lines the ATP pocket. One can recognise a Helicase C-terminal domain in the interval 357–525 (TLLGDLKNVR…SFAIQFPDLT (169 aa)). 2 N-linked (GlcNAc...) asparagine glycosylation sites follow: Asn-594 and Asn-614. Residues 667–734 (ASWKPTSRQQ…QDPSSLNFVA (68 aa)) form a disordered region. The segment covering 684-693 (EEDNDVEQAS) has biased composition (acidic residues). Residues 695-709 (DNAKNDSEDGYERSI) are compositionally biased toward basic and acidic residues. Residue Asn-699 is glycosylated (N-linked (GlcNAc...) asparagine). Over residues 725–734 (QDPSSLNFVA) the composition is skewed to polar residues.

This sequence belongs to the helicase family. As to quaternary structure, homodimer; in free form. Component of the mitochondrial degradosome (mtEXO) complex which is a heteropentamer containing 2 copies of SUPV3L1 and 3 copies of PNPT1. Mg(2+) serves as cofactor. It depends on Mn(2+) as a cofactor.

It is found in the nucleus. The protein resides in the mitochondrion matrix. The protein localises to the mitochondrion nucleoid. It catalyses the reaction ATP + H2O = ADP + phosphate + H(+). In terms of biological role, major helicase player in mitochondrial RNA metabolism. Component of the mitochondrial degradosome (mtEXO) complex, that degrades 3' overhang double-stranded RNA with a 3'-to-5' directionality in an ATP-dependent manner. ATPase and ATP-dependent multisubstrate helicase, able to unwind double-stranded (ds) DNA and RNA, and RNA/DNA heteroduplexes in the 5'-to-3' direction. Plays a role in the RNA surveillance system in mitochondria; regulates the stability of mature mRNAs, the removal of aberrantly formed mRNAs and the rapid degradation of non coding processing intermediates. Confers salinity and drought stress tolerances by maintaining both photosynthesis and antioxidant machinery, probably via an increase in plant hormones levels such as gibberellic acid (GA(3)), the cytokinin zeatin (Z) and indole-3-acetic acid (IAA). This chain is ATP-dependent RNA helicase SUV3L, mitochondrial, found in Oryza sativa subsp. japonica (Rice).